A 124-amino-acid polypeptide reads, in one-letter code: Large ribosomal subunit protein bL12 (124 aa).

The protein belongs to the bacterial ribosomal protein bL12 family. In terms of assembly, homodimer. Part of the ribosomal stalk of the 50S ribosomal subunit. Forms a multimeric L10(L12)X complex, where L10 forms an elongated spine to which 2 to 4 L12 dimers bind in a sequential fashion. Binds GTP-bound translation factors.

Functionally, forms part of the ribosomal stalk which helps the ribosome interact with GTP-bound translation factors. Is thus essential for accurate translation. The chain is Large ribosomal subunit protein bL12 from Pelodictyon phaeoclathratiforme (strain DSM 5477 / BU-1).